Consider the following 583-residue polypeptide: Isocitrate dehydrogenase kinase/phosphatase (583 aa).

ATP contacts are provided by residues 315 to 321 (APGIRGM) and Lys-336. Asp-371 is an active-site residue.

Belongs to the AceK family.

It is found in the cytoplasm. The enzyme catalyses L-seryl-[isocitrate dehydrogenase] + ATP = O-phospho-L-seryl-[isocitrate dehydrogenase] + ADP + H(+). Its function is as follows. Bifunctional enzyme which can phosphorylate or dephosphorylate isocitrate dehydrogenase (IDH) on a specific serine residue. This is a regulatory mechanism which enables bacteria to bypass the Krebs cycle via the glyoxylate shunt in response to the source of carbon. When bacteria are grown on glucose, IDH is fully active and unphosphorylated, but when grown on acetate or ethanol, the activity of IDH declines drastically concomitant with its phosphorylation. The sequence is that of Isocitrate dehydrogenase kinase/phosphatase from Salmonella gallinarum (strain 287/91 / NCTC 13346).